We begin with the raw amino-acid sequence, 193 residues long: Ribosomal RNA small subunit methyltransferase G (193 aa).

S-adenosyl-L-methionine-binding positions include glycine 72, phenylalanine 77, 123 to 124, and arginine 137; that span reads IE.

This sequence belongs to the methyltransferase superfamily. RNA methyltransferase RsmG family.

Its subcellular location is the cytoplasm. It carries out the reaction guanosine(527) in 16S rRNA + S-adenosyl-L-methionine = N(7)-methylguanosine(527) in 16S rRNA + S-adenosyl-L-homocysteine. Its function is as follows. Specifically methylates the N7 position of guanine in position 527 of 16S rRNA. This is Ribosomal RNA small subunit methyltransferase G from Wolinella succinogenes (strain ATCC 29543 / DSM 1740 / CCUG 13145 / JCM 31913 / LMG 7466 / NCTC 11488 / FDC 602W) (Vibrio succinogenes).